A 404-amino-acid chain; its full sequence is Exodeoxyribonuclease 7 large subunit (404 aa).

It belongs to the XseA family. Heterooligomer composed of large and small subunits.

Its subcellular location is the cytoplasm. It carries out the reaction Exonucleolytic cleavage in either 5'- to 3'- or 3'- to 5'-direction to yield nucleoside 5'-phosphates.. Its function is as follows. Bidirectionally degrades single-stranded DNA into large acid-insoluble oligonucleotides, which are then degraded further into small acid-soluble oligonucleotides. In Fusobacterium nucleatum subsp. nucleatum (strain ATCC 25586 / DSM 15643 / BCRC 10681 / CIP 101130 / JCM 8532 / KCTC 2640 / LMG 13131 / VPI 4355), this protein is Exodeoxyribonuclease 7 large subunit.